The following is a 616-amino-acid chain: Sialic acid TRAP transporter permease protein SiaT (616 aa).

The interval 1–190 (MKYINKLEEW…RISNYIKLGS (190 aa)) is TRAP transporter small permease. Transmembrane regions (helical) follow at residues 9–29 (EWLG…QILS), 36–56 (PLIW…MLGI), 83–103 (TNTF…HFGI), 117–137 (GGIS…LMMF), 153–173 (YLPA…LFFA), 195–215 (IALL…WSLF), 244–264 (FPLL…TGGI), 288–308 (IGAS…AGGL), 332–352 (ASCI…YGVI), 357–377 (IAKL…ALMA), 407–427 (FWAI…LFSP), 431–451 (AIVA…ELTL), 459–479 (IEAM…TFFG), 505–525 (VLVM…ALAL), 527–547 (FLVL…LIFF), 552–572 (TLNM…FVVA), and 587–607 (LPFL…PQII). Positions 191 to 616 (SSVYIALLVW…ITFVPNLLIP (426 aa)) are TRAP transporter large permease.

It in the N-terminal section; belongs to the TRAP transporter small permease family. In the C-terminal section; belongs to the TRAP transporter large permease family. As to quaternary structure, the complex comprises the extracytoplasmic solute receptor protein SiaP, and the fused transmembrane protein SiaT.

It localises to the cell inner membrane. In terms of biological role, part of the tripartite ATP-independent periplasmic (TRAP) transport system SiaPT involved in the uptake of sialic acid. The sequence is that of Sialic acid TRAP transporter permease protein SiaT (siaT) from Haemophilus influenzae (strain 86-028NP).